Reading from the N-terminus, the 452-residue chain is Bifunctional protein GlmU (452 aa).

The segment at 1–232 (MTTNAPGAVI…EADMQGVNSR (232 aa)) is pyrophosphorylase. UDP-N-acetyl-alpha-D-glucosamine-binding positions include 11–14 (LAAG), Lys25, Gln78, and 83–84 (GT). A Mg(2+)-binding site is contributed by Asp108. The UDP-N-acetyl-alpha-D-glucosamine site is built by Gly144, Glu158, and Asn230. Asn230 serves as a coordination point for Mg(2+). The tract at residues 233–253 (ADLAAAEATMQQRLRMAAMAG) is linker. The interval 254–452 (GVTMLDPSSV…HKDKKKASGE (199 aa)) is N-acetyltransferase. UDP-N-acetyl-alpha-D-glucosamine is bound by residues Arg319 and Lys337. His349 functions as the Proton acceptor in the catalytic mechanism. 2 residues coordinate UDP-N-acetyl-alpha-D-glucosamine: Tyr352 and Asn363. Acetyl-CoA-binding positions include Ala366, 372–373 (NY), Ser391, Ser409, and Arg426.

This sequence in the N-terminal section; belongs to the N-acetylglucosamine-1-phosphate uridyltransferase family. The protein in the C-terminal section; belongs to the transferase hexapeptide repeat family. In terms of assembly, homotrimer. It depends on Mg(2+) as a cofactor.

The protein localises to the cytoplasm. The catalysed reaction is alpha-D-glucosamine 1-phosphate + acetyl-CoA = N-acetyl-alpha-D-glucosamine 1-phosphate + CoA + H(+). It carries out the reaction N-acetyl-alpha-D-glucosamine 1-phosphate + UTP + H(+) = UDP-N-acetyl-alpha-D-glucosamine + diphosphate. Its pathway is nucleotide-sugar biosynthesis; UDP-N-acetyl-alpha-D-glucosamine biosynthesis; N-acetyl-alpha-D-glucosamine 1-phosphate from alpha-D-glucosamine 6-phosphate (route II): step 2/2. It participates in nucleotide-sugar biosynthesis; UDP-N-acetyl-alpha-D-glucosamine biosynthesis; UDP-N-acetyl-alpha-D-glucosamine from N-acetyl-alpha-D-glucosamine 1-phosphate: step 1/1. The protein operates within bacterial outer membrane biogenesis; LPS lipid A biosynthesis. Its function is as follows. Catalyzes the last two sequential reactions in the de novo biosynthetic pathway for UDP-N-acetylglucosamine (UDP-GlcNAc). The C-terminal domain catalyzes the transfer of acetyl group from acetyl coenzyme A to glucosamine-1-phosphate (GlcN-1-P) to produce N-acetylglucosamine-1-phosphate (GlcNAc-1-P), which is converted into UDP-GlcNAc by the transfer of uridine 5-monophosphate (from uridine 5-triphosphate), a reaction catalyzed by the N-terminal domain. The chain is Bifunctional protein GlmU from Parvibaculum lavamentivorans (strain DS-1 / DSM 13023 / NCIMB 13966).